The sequence spans 776 residues: Transcriptional regulator QRICH1 (776 aa).

Met-1 is subject to N-acetylmethionine. One can recognise a CARD domain in the interval 6 to 48; that stretch reads ENTISFEEYIRVKARSVPQHRMKEFLDSLASKGPEALQEFQQT. 2 disordered regions span residues 139–164 and 218–240; these read IQGQ…PSQL and ALSP…GTAS. A Phosphoserine modification is found at Ser-345. Residues Lys-353 and Lys-358 each participate in a glycyl lysine isopeptide (Lys-Gly) (interchain with G-Cter in SUMO2) cross-link. Residues 419-429 show a composition bias toward low complexity; that stretch reads QQQPQQQTPQE. A disordered region spans residues 419-441; it reads QQQPQQQTPQEQTPPPQQQQQQL. Ser-464 is modified (phosphoserine).

It localises to the nucleus. It is found in the cytoplasm. The protein resides in the cell membrane. Functionally, transcriptional regulator that acts as a mediator of the integrated stress response (ISR) through transcriptional control of protein homeostasis under conditions of ER stress. Controls the outcome of the unfolded protein response (UPR) which is an ER-stress response pathway. ER stress induces QRICH1 translation by a ribosome translation re-initiation mechanism in response to EIF2S1/eIF-2-alpha phosphorylation, and stress-induced QRICH1 regulates a transcriptional program associated with protein translation, protein secretion-mediated proteotoxicity and cell death during the terminal UPR. May cooperate with ATF4 transcription factor signaling to regulate ER homeostasis which is critical for cell viability. Up-regulates CASP3/caspase-3 activity in epithelial cells under ER stress. Central regulator of proteotoxicity associated with ER stress-mediated inflammatory diseases in the intestines and liver. Involved in chondrocyte hypertrophy, a process required for normal longitudinal bone growth. The polypeptide is Transcriptional regulator QRICH1 (Homo sapiens (Human)).